Reading from the N-terminus, the 168-residue chain is Phosphopantetheine adenylyltransferase (168 aa).

Residue threonine 14 coordinates substrate. ATP contacts are provided by residues 14-15 (TF) and histidine 22. Substrate-binding residues include lysine 46, leucine 78, and arginine 92. ATP-binding positions include 93-95 (GLR), glutamate 103, and 128-134 (YSFISSS).

It belongs to the bacterial CoaD family. In terms of assembly, homohexamer. The cofactor is Mg(2+).

Its subcellular location is the cytoplasm. It carries out the reaction (R)-4'-phosphopantetheine + ATP + H(+) = 3'-dephospho-CoA + diphosphate. Its pathway is cofactor biosynthesis; coenzyme A biosynthesis; CoA from (R)-pantothenate: step 4/5. In terms of biological role, reversibly transfers an adenylyl group from ATP to 4'-phosphopantetheine, yielding dephospho-CoA (dPCoA) and pyrophosphate. This is Phosphopantetheine adenylyltransferase from Xanthomonas axonopodis pv. citri (strain 306).